Consider the following 209-residue polypeptide: CMRF35-like molecule 7 (209 aa).

An N-terminal signal peptide occupies residues 1–17 (MWLSPALLLLSFPGCLS). The 103-residue stretch at 18–120 (IQGPALVRGP…TDRGTRVKVN (103 aa)) folds into the Ig-like V-type domain. Residues 18–157 (IQGPALVRGP…SSDLQKRTYY (140 aa)) lie on the Extracellular side of the membrane. Cysteines 36 and 104 form a disulfide. N-linked (GlcNAc...) asparagine glycosylation occurs at asparagine 97. The chain crosses the membrane as a helical span at residues 158-178 (MLLVFVKVPALLILVGAVLWL). Residues 179-209 (KRSTQKVPEEQWRHTLCSDLDSELLAKDISP) are Cytoplasmic-facing. Serine 196 is subject to Phosphoserine.

The protein belongs to the CD300 family. Interacts with TYROBP, which enhances cell surface expression and activation properties. May interact with HCST. Post-translationally, N-glycosylated. In terms of tissue distribution, expressed in myeloid cells (at protein level).

The protein localises to the cell membrane. Acts as an activating immune receptor in mast cells through its interaction with ITAM-bearing adapter TYROBP. The chain is CMRF35-like molecule 7 (Cd300lb) from Mus musculus (Mouse).